The sequence spans 298 residues: Proline iminopeptidase (298 aa).

In terms of domain architecture, AB hydrolase-1 spans 26–277 (VLLLHGGPAM…NGSHLAMWDD (252 aa)). Catalysis depends on S103, which acts as the Nucleophile. D244 is a catalytic residue. H271 acts as the Proton donor in catalysis.

It belongs to the peptidase S33 family. As to quaternary structure, monomer.

The enzyme catalyses Release of N-terminal proline from a peptide.. Its function is as follows. Releases the N-terminal proline from various substrates. Cleaves specifically Pro-betaNA and small peptides containing proline at the amino terminal. No activity against hydroxyproline-betaNA. In Elizabethkingia meningoseptica (Chryseobacterium meningosepticum), this protein is Proline iminopeptidase (fpaP).